Reading from the N-terminus, the 296-residue chain is GTPase Era (296 aa).

An Era-type G domain is found at 7 to 174 (RTGFVAIVGR…LEEIAQRLPE (168 aa)). Positions 15-22 (GRPNVGKS) are G1. GTP is bound at residue 15–22 (GRPNVGKS). The interval 41–45 (QTTRH) is G2. Residues 62–65 (DTPG) are G3. GTP-binding positions include 62 to 66 (DTPGF) and 123 to 126 (SKID). The tract at residues 123-126 (SKID) is G4. Residues 153 to 155 (VSA) are G5. The region spanning 197-281 (VREKIFRLVG…HLEVYIKVRK (85 aa)) is the KH type-2 domain.

It belongs to the TRAFAC class TrmE-Era-EngA-EngB-Septin-like GTPase superfamily. Era GTPase family. As to quaternary structure, monomer.

The protein localises to the cytoplasm. It is found in the cell inner membrane. An essential GTPase that binds both GDP and GTP, with rapid nucleotide exchange. Plays a role in 16S rRNA processing and 30S ribosomal subunit biogenesis and possibly also in cell cycle regulation and energy metabolism. This is GTPase Era from Bordetella avium (strain 197N).